The chain runs to 255 residues: Fe(3+) dicitrate transport ATP-binding protein FecE (255 aa).

In terms of domain architecture, ABC transporter spans 3-238; sequence LRTENLTVSY…GLLRTVFSVE (236 aa). 35–42 lines the ATP pocket; that stretch reads GPNGCGKS.

This sequence belongs to the ABC transporter superfamily. In terms of assembly, the complex is composed of two ATP-binding proteins (FecE), two transmembrane proteins (FecC and FecD) and a solute-binding protein (FecB).

Its subcellular location is the cell inner membrane. The enzyme catalyses iron(III) dicitrate(out) + ATP + H2O = iron(III) dicitrate(in) + ADP + phosphate + H(+). Its function is as follows. Part of the ABC transporter complex FecBCDE involved in citrate-dependent Fe(3+) uptake. Binds ATP. Probably responsible for energy coupling to the transport system. The polypeptide is Fe(3+) dicitrate transport ATP-binding protein FecE (Escherichia coli (strain K12)).